A 346-amino-acid chain; its full sequence is MMKATPIALLLAGVLASPLCAAGLDARLTLVEGSTDDVRVNLTLTNTGEKPVRLLKWQLPGSEDAPLFQVERDGQPVDYEGALIKRAAPSDKDYQLLKAGQSLTVQAEVSGLYDMSAQGQYSIRYLLPTVAQEGKAAKAKQAQASESNAVTLWVDGVSDDRVLAKAAVAEPQAVSASVSFSGRCTNTQKSDILAALDAASGIANNSSSYLAVDKPNGQRYRSWFGAYDATRWNQAETNFSKIKDAIDNKPLTFDCGCKQSYFAYVYPDQPYKVYLCKSFWTAPVTGTDSRAGTIVHELSHFNVVAGTDDLGYGQANARNLASTDPQKALNNADNHEYFAENTPSEN.

The N-terminal stretch at 1 to 21 is a signal peptide; that stretch reads MMKATPIALLLAGVLASPLCA. His296 contributes to the Zn(2+) binding site. The active site involves Glu297. Zn(2+) contacts are provided by His300 and Asp309.

Belongs to the peptidase M35 family. Zn(2+) is required as a cofactor.

Functionally, heat-labile protease. The chain is Extracellular protease from Aeromonas hydrophila.